A 456-amino-acid polypeptide reads, in one-letter code: Signal transduction histidine-protein kinase ArlS (456 aa).

2 helical membrane passes run 13 to 33 (LITT…IIFF) and 157 to 177 (IVAL…SYIF). Residues 179-232 (SQITKPIVTMSNKMNQIRRDGFQNKLELTTNYEETDNLIDTFNEMMYQIEESFN) form the HAMP domain. The Histidine kinase domain occupies 240 to 456 (DASHELRTPL…TFKISFPVLN (217 aa)). His-243 is subject to Phosphohistidine; by autocatalysis.

In terms of processing, autophosphorylated.

The protein resides in the cell membrane. The enzyme catalyses ATP + protein L-histidine = ADP + protein N-phospho-L-histidine.. Functionally, member of the two-component regulatory system ArlS/ArlR. ArlS probably functions as a sensor protein kinase which is autophosphorylated at a histidine residue and transfers its phosphate group to ArlR. The polypeptide is Signal transduction histidine-protein kinase ArlS (arlS) (Staphylococcus epidermidis (strain ATCC 12228 / FDA PCI 1200)).